Reading from the N-terminus, the 116-residue chain is MRGLSTKPVAIIIAILTVHFLFAAVTSQSSGDFVPIESKCNGTIAECSLSTAEEEFEMDSEINRRILATTKYISYGALRRNTVPCSRRGASYYNCRRGAQANPYSRGCSAITRCRR.

The N-terminal stretch at 1 to 23 (MRGLSTKPVAIIIAILTVHFLFA) is a signal peptide. A propeptide spans 24 to 67 (AVTSQSSGDFVPIESKCNGTIAECSLSTAEEEFEMDSEINRRIL) (removed in mature form). Asn41 carries an N-linked (GlcNAc...) asparagine glycan. Cystine bridges form between Cys85–Cys95 and Cys108–Cys114.

Belongs to the plant rapid alkalinization factor (RALF) family. In terms of processing, proteolytically cleaved, probably by S1P, a subtilisin-like serine protease (subtilase). Expressed in roots, stems, leaves and plants.

It is found in the secreted. Functionally, cell signaling peptide that may regulate plant stress, growth, and development. Mediates a rapid alkalinization of extracellular space by mediating a transient increase in the cytoplasmic Ca(2+) concentration leading to a calcium-dependent signaling events through a cell surface receptor and a concomitant activation of some intracellular mitogen-activated protein kinases. The chain is Protein RALF-like 33 (RALFL33) from Arabidopsis thaliana (Mouse-ear cress).